Consider the following 184-residue polypeptide: Lactoylglutathione lyase (184 aa).

Alanine 2 is modified (N-acetylalanine). A disulfide bond links cysteine 19 and cysteine 20. A VOC domain is found at 31-177; it reads LLQQTMLRIK…DGYWIEILNP (147 aa). 2 residues coordinate substrate: glutamine 34 and arginine 38. Glutamine 34 provides a ligand contact to Zn(2+). Zn(2+) is bound at residue glutamate 100. Asparagine 104 contributes to the substrate binding site. Threonine 107 carries the post-translational modification Phosphothreonine. The substrate site is built by arginine 123 and histidine 127. Histidine 127 contacts Zn(2+). Cysteine 139 carries the S-glutathionyl cysteine modification. Lysine 148 is subject to N6-acetyllysine; alternate. Lysine 148 is modified (N6-succinyllysine; alternate). 157–158 is a substrate binding site; it reads KM. Residue glutamate 173 coordinates Zn(2+). Glutamate 173 (proton donor/acceptor) is an active-site residue.

This sequence belongs to the glyoxalase I family. Homodimer. It depends on Zn(2+) as a cofactor. Post-translationally, glutathionylation at Cys-139 inhibits enzyme activity. In terms of processing, phosphorylated at Thr-107 in the presence of CaMK2. However, this is a consensus site for phosphorylation by CK2 so phosphorylation may be mediated by CK2 rather than CaMK2. Phosphorylation is induced by TNF and suppresses the TNF-induced transcriptional activity of NF-kappa-B. Exists in a nitric oxide (NO)-modified form. The exact nature of the modification is unknown, but it suppresses the TNF-induced transcriptional activity of NF-kappa-B.

It catalyses the reaction (R)-S-lactoylglutathione = methylglyoxal + glutathione. It participates in secondary metabolite metabolism; methylglyoxal degradation; (R)-lactate from methylglyoxal: step 1/2. Functionally, catalyzes the conversion of hemimercaptal, formed from methylglyoxal and glutathione, to S-lactoylglutathione. Involved in the regulation of TNF-induced transcriptional activity of NF-kappa-B. Required for normal osteoclastogenesis. This chain is Lactoylglutathione lyase (Glo1), found in Rattus norvegicus (Rat).